We begin with the raw amino-acid sequence, 372 residues long: Chaperone protein DnaJ (372 aa).

The J domain maps to D5–G70. The CR-type zinc-finger motif lies at G134 to E212. Positions 147, 150, 164, 167, 186, 189, 200, and 203 each coordinate Zn(2+). 4 CXXCXGXG motif repeats span residues C147 to G154, C164 to G171, C186 to G193, and C200 to G207.

Belongs to the DnaJ family. As to quaternary structure, homodimer. Zn(2+) serves as cofactor.

It localises to the cytoplasm. In terms of biological role, participates actively in the response to hyperosmotic and heat shock by preventing the aggregation of stress-denatured proteins and by disaggregating proteins, also in an autonomous, DnaK-independent fashion. Unfolded proteins bind initially to DnaJ; upon interaction with the DnaJ-bound protein, DnaK hydrolyzes its bound ATP, resulting in the formation of a stable complex. GrpE releases ADP from DnaK; ATP binding to DnaK triggers the release of the substrate protein, thus completing the reaction cycle. Several rounds of ATP-dependent interactions between DnaJ, DnaK and GrpE are required for fully efficient folding. Also involved, together with DnaK and GrpE, in the DNA replication of plasmids through activation of initiation proteins. This chain is Chaperone protein DnaJ, found in Wolbachia pipientis subsp. Culex pipiens (strain wPip).